The primary structure comprises 346 residues: Small ribosomal subunit biogenesis GTPase RsgA 1 (346 aa).

A CP-type G domain is found at glutamate 93–phenylalanine 248. Residues threonine 138–aspartate 141 and glycine 190–serine 198 each bind GTP. The Zn(2+) site is built by cysteine 271, cysteine 276, histidine 278, and cysteine 284.

The protein belongs to the TRAFAC class YlqF/YawG GTPase family. RsgA subfamily. In terms of assembly, monomer. Associates with 30S ribosomal subunit, binds 16S rRNA. It depends on Zn(2+) as a cofactor.

It is found in the cytoplasm. One of several proteins that assist in the late maturation steps of the functional core of the 30S ribosomal subunit. Helps release RbfA from mature subunits. May play a role in the assembly of ribosomal proteins into the subunit. Circularly permuted GTPase that catalyzes slow GTP hydrolysis, GTPase activity is stimulated by the 30S ribosomal subunit. In Listeria innocua serovar 6a (strain ATCC BAA-680 / CLIP 11262), this protein is Small ribosomal subunit biogenesis GTPase RsgA 1.